The chain runs to 203 residues: Molybdenum cofactor guanylyltransferase (203 aa).

GTP-binding positions include 20–22 (LAG), lysine 33, asparagine 61, aspartate 78, and aspartate 108. Position 108 (aspartate 108) interacts with Mg(2+).

Belongs to the MobA family. Monomer. Mg(2+) serves as cofactor.

Its subcellular location is the cytoplasm. It catalyses the reaction Mo-molybdopterin + GTP + H(+) = Mo-molybdopterin guanine dinucleotide + diphosphate. Transfers a GMP moiety from GTP to Mo-molybdopterin (Mo-MPT) cofactor (Moco or molybdenum cofactor) to form Mo-molybdopterin guanine dinucleotide (Mo-MGD) cofactor. This Vibrio cholerae serotype O1 (strain ATCC 39315 / El Tor Inaba N16961) protein is Molybdenum cofactor guanylyltransferase.